The following is a 61-amino-acid chain: Small ribosomal subunit protein uS14 (61 aa).

The Zn(2+) site is built by cysteine 24, cysteine 27, cysteine 40, and cysteine 43.

The protein belongs to the universal ribosomal protein uS14 family. Zinc-binding uS14 subfamily. Part of the 30S ribosomal subunit. Contacts proteins S3 and S10. Requires Zn(2+) as cofactor.

Its function is as follows. Binds 16S rRNA, required for the assembly of 30S particles and may also be responsible for determining the conformation of the 16S rRNA at the A site. This Thermotoga maritima (strain ATCC 43589 / DSM 3109 / JCM 10099 / NBRC 100826 / MSB8) protein is Small ribosomal subunit protein uS14.